Consider the following 444-residue polypeptide: Acyl-CoA 6-desaturase (444 aa).

Topologically, residues 1 to 122 (MGKGGNQDEG…FRALRKTAED (122 aa)) are cytoplasmic. A Cytochrome b5 heme-binding domain is found at 18–95 (MPTFRWEEIQ…MKPLLIGELA (78 aa)). A helical membrane pass occupies residues 123-143 (MNLFKSNQLFFLLHLAHIIAM). Residues 144–147 (ESIA) are Lumenal-facing. The helical transmembrane segment at 148–168 (WFTLFYFGNGWIPTIITAFVL) threads the bilayer. Over 169–264 (ATSQAQAGWL…KYLPYNHQHE (96 aa)) the chain is Cytoplasmic. A Histidine box-1 motif is present at residues 180 to 184 (HDYGH). The short motif at 217 to 221 (HFQHH) is the Histidine box-2 element. Residues 265–285 (YFFLIGPPLLIPLYFQYQIIM) traverse the membrane as a helical segment. At 286 to 305 (TMIVRKYWADLAWAISYYTR) the chain is on the lumenal side. A helical transmembrane segment spans residues 306-326 (FFITYIPFYGVLGSILFLNFI). Residues 327–444 (RFLESHWFVW…QLWLDAYLHK (118 aa)) are Cytoplasmic-facing. The Histidine box-3 signature appears at 382–386 (QIEHH).

This sequence belongs to the fatty acid desaturase type 1 family.

It localises to the endoplasmic reticulum membrane. The enzyme catalyses (9Z,12Z)-octadecadienoyl-CoA + 2 Fe(II)-[cytochrome b5] + O2 + 2 H(+) = (6Z,9Z,12Z)-octadecatrienoyl-CoA + 2 Fe(III)-[cytochrome b5] + 2 H2O. It carries out the reaction (9Z,12Z,15Z)-octadecatrienoyl-CoA + 2 Fe(II)-[cytochrome b5] + O2 + 2 H(+) = (6Z,9Z,12Z,15Z)-octadecatetraenoyl-CoA + 2 Fe(III)-[cytochrome b5] + 2 H2O. The catalysed reaction is (9Z,12Z,15Z,18Z,21Z)-tetracosapentaenoyl-CoA + 2 Fe(II)-[cytochrome b5] + O2 + 2 H(+) = (6Z,9Z,12Z,15Z,18Z,21Z)-tetracosahexaenoyl-CoA + 2 Fe(III)-[cytochrome b5] + 2 H2O. It catalyses the reaction (11E)-octadecenoyl-CoA + 2 Fe(II)-[cytochrome b5] + O2 + 2 H(+) = (6Z,11E)-octadecadienoyl-CoA + 2 Fe(III)-[cytochrome b5] + 2 H2O. The enzyme catalyses (11Z,14Z)-eicosadienoyl-CoA + 2 Fe(II)-[cytochrome b5] + O2 + 2 H(+) = (8Z,11Z,14Z)-eicosatrienoyl-CoA + 2 Fe(III)-[cytochrome b5] + 2 H2O. It carries out the reaction (11Z,14Z,17Z)-eicosatrienoyl-CoA + 2 Fe(II)-[cytochrome b5] + O2 + 2 H(+) = (8Z,11Z,14Z,17Z)-eicosatetraenoyl-CoA + 2 Fe(III)-[cytochrome b5] + 2 H2O. It participates in lipid metabolism; polyunsaturated fatty acid biosynthesis. In terms of biological role, involved in the biosynthesis of highly unsaturated fatty acids (HUFA) from the essential polyunsaturated fatty acids (PUFA) linoleic acid (LA) (18:2n-6) and alpha-linolenic acid (ALA) (18:3n-3) precursors, acting as a fatty acyl-coenzyme A (CoA) desaturase that introduces a cis double bond at carbon 6 of the fatty acyl chain. Catalyzes the first and rate limiting step in this pathway which is the desaturation of LA (18:2n-6) and ALA (18:3n-3) into gamma-linoleate (GLA) (18:3n-6) and stearidonate (18:4n-3), respectively. Subsequently, in the biosynthetic pathway of HUFA n-3 series, it desaturates tetracosapentaenoate (24:5n-3) to tetracosahexaenoate (24:6n-3), which is then converted to docosahexaenoate (DHA)(22:6n-3), an important lipid for nervous system function. It can also desaturate (11E)-octadecenoate (trans-vaccenoate, a metabolite in the biohydrogenation pathway of LA and the predominant trans fatty acid in cow milk) at carbon 6 generating (6Z,11E)-octadecadienoate. In addition to Delta-6 activity, this enzyme exhibits Delta-8 activity with slight biases toward n-3 fatty acyl-CoA substrates. This chain is Acyl-CoA 6-desaturase (FADS2), found in Bos taurus (Bovine).